The following is a 100-amino-acid chain: Toxin ParE3 (100 aa).

Belongs to the RelE toxin family.

In terms of biological role, toxic component of a type II toxin-antitoxin (TA) system. Its toxic effect is neutralized by coexpression with cognate antitoxin ParD3 but no other ParD or RelB antitoxin. The chain is Toxin ParE3 (parE3) from Caulobacter vibrioides (strain ATCC 19089 / CIP 103742 / CB 15) (Caulobacter crescentus).